A 139-amino-acid polypeptide reads, in one-letter code: Large ribosomal subunit protein eL34 (139 aa).

A disordered region spans residues 113-139; it reads VSKPPKIAKAPAAAAAAKPAKTATKSK.

This sequence belongs to the eukaryotic ribosomal protein eL34 family.

This chain is Large ribosomal subunit protein eL34 (RpL34), found in Ochlerotatus triseriatus (Eastern treehole mosquito).